Consider the following 451-residue polypeptide: Methylenetetrahydrofolate--tRNA-(uracil-5-)-methyltransferase TrmFO (451 aa).

9 to 14 (GGGMAG) contacts FAD.

The protein belongs to the MnmG family. TrmFO subfamily. Requires FAD as cofactor.

The protein localises to the cytoplasm. It catalyses the reaction uridine(54) in tRNA + (6R)-5,10-methylene-5,6,7,8-tetrahydrofolate + NADH + H(+) = 5-methyluridine(54) in tRNA + (6S)-5,6,7,8-tetrahydrofolate + NAD(+). It carries out the reaction uridine(54) in tRNA + (6R)-5,10-methylene-5,6,7,8-tetrahydrofolate + NADPH + H(+) = 5-methyluridine(54) in tRNA + (6S)-5,6,7,8-tetrahydrofolate + NADP(+). Its function is as follows. Catalyzes the folate-dependent formation of 5-methyl-uridine at position 54 (M-5-U54) in all tRNAs. This chain is Methylenetetrahydrofolate--tRNA-(uracil-5-)-methyltransferase TrmFO, found in Dinoroseobacter shibae (strain DSM 16493 / NCIMB 14021 / DFL 12).